The primary structure comprises 347 residues: N-acetyl-gamma-glutamyl-phosphate reductase (347 aa).

Cys152 is an active-site residue.

The protein belongs to the NAGSA dehydrogenase family. Type 1 subfamily.

It localises to the cytoplasm. The enzyme catalyses N-acetyl-L-glutamate 5-semialdehyde + phosphate + NADP(+) = N-acetyl-L-glutamyl 5-phosphate + NADPH + H(+). Its pathway is amino-acid biosynthesis; L-arginine biosynthesis; N(2)-acetyl-L-ornithine from L-glutamate: step 3/4. Catalyzes the NADPH-dependent reduction of N-acetyl-5-glutamyl phosphate to yield N-acetyl-L-glutamate 5-semialdehyde. This Neisseria meningitidis serogroup A / serotype 4A (strain DSM 15465 / Z2491) protein is N-acetyl-gamma-glutamyl-phosphate reductase.